A 219-amino-acid polypeptide reads, in one-letter code: Flagellar transcriptional regulator FlhC (219 aa).

Positions 137, 140, 157, and 160 each coordinate Zn(2+).

It belongs to the FlhC family. In terms of assembly, heterohexamer composed of two FlhC and four FlhD subunits. Each FlhC binds a FlhD dimer, forming a heterotrimer, and a hexamer assembles by dimerization of two heterotrimers. Requires Zn(2+) as cofactor.

It is found in the cytoplasm. Its function is as follows. Functions in complex with FlhD as a master transcriptional regulator that regulates transcription of several flagellar and non-flagellar operons by binding to their promoter region. Activates expression of class 2 flagellar genes, including fliA, which is a flagellum-specific sigma factor that turns on the class 3 genes. Also regulates genes whose products function in a variety of physiological pathways. The chain is Flagellar transcriptional regulator FlhC from Paraburkholderia phymatum (strain DSM 17167 / CIP 108236 / LMG 21445 / STM815) (Burkholderia phymatum).